A 2567-amino-acid chain; its full sequence is Highly reducing polyketide synthase sor1 (2567 aa).

Positions Ser14–Asp436 constitute a Ketosynthase family 3 (KS3) domain. Residues Cys187, His322, and His359 each act as for beta-ketoacyl synthase activity in the active site. A malonyl-CoA:ACP transacylase (MAT) domain region spans residues Val550–Leu841. Residues His939–Ser1079 are N-terminal hotdog fold. Positions His939–Ser1249 are dehydratase (DH) domain. Positions His939–Leu1252 constitute a PKS/mFAS DH domain. His971 acts as the Proton acceptor; for dehydratase activity in catalysis. The C-terminal hotdog fold stretch occupies residues Tyr1095–Leu1252. The active-site Proton donor; for dehydratase activity is the Asp1161. A methyltransferase (CMet) domain region spans residues Leu1426 to Leu1534. The segment at Phe1852–Leu2163 is enoyl reductase (ER) domain. The interval Ala2187 to Asp2369 is ketoreductase (KR) domain. The Carrier domain maps to Glu2481–Ser2558. Ser2518 carries the O-(pantetheine 4'-phosphoryl)serine modification.

Its pathway is secondary metabolite biosynthesis. In terms of biological role, highly reducing polyketide synthase; part of the SOR gene cluster that mediates the biosynthesis of sorbicillinoids, a diverse group of yellow secondary metabolites that restrict growth of competing pathogenic fungi but not of bacteria. Sorbicillinoids biosynthesis requires the action of two PKSs. The SOR cluster is required for the production of trichodimerol and dihydrotrichotetronin, with sor2 being sufficient for production of trichodimerol, but not dihydrotrichotetronin in the light. Sor1 iteratively combines three acetyl units and the growing chain is modified by the ketoacyl reductase subunit, and optional by the enoyl reductase subunit in the second cycle. The polyketide is then handed over to the PKS sor2, which adds three more acetyl units, and two methyl groups. Sor2 releases an aldehyde, which undergoes spontaneous cyclization resulting in the formation of sorbicillin or 2',3'-dihydrosorbicillin. The monooxygenase sor5 oxidizes sorbicillin and 2',3'-dihydrosorbicillin to 2',3'-dihydrosorbicillinol and sorbicillinol, respectively. The oxidoreductase sor8 further converts sorbicillinol into oxosorbicillinol. Sorbicillinol is the building block for the other sorbicillinoids such as disorbicillinol, bisvertinolon, dihydrobisvertinolone, and dihydrotrichotetronine. In Hypocrea jecorina (strain QM6a) (Trichoderma reesei), this protein is Highly reducing polyketide synthase sor1.